The primary structure comprises 484 residues: Polyamine oxidase 3 (484 aa).

Residues Glu47, Arg55, Val236, and Glu423 each coordinate FAD. The short motif at Ser482 to Leu484 is the Microbody targeting signal element.

It belongs to the flavin monoamine oxidase family. FAD is required as a cofactor. As to expression, widely expressed.

The protein localises to the peroxisome. The enzyme catalyses spermine + O2 + H2O = 3-aminopropanal + spermidine + H2O2. The catalysed reaction is N(1)-acetylspermine + O2 + H2O = 3-acetamidopropanal + spermidine + H2O2. It carries out the reaction norspermine + O2 + H2O = norspermidine + 3-aminopropanal + H2O2. It catalyses the reaction spermidine + O2 + H2O = 3-aminopropanal + putrescine + H2O2. The enzyme catalyses thermospermine + O2 + H2O = 3-aminopropanal + spermidine + H2O2. It functions in the pathway amine and polyamine degradation; spermine degradation. Its pathway is amine and polyamine degradation; spermidine degradation. Its function is as follows. Flavoenzyme involved in polyamine back-conversion. Catalyzes the oxidation of the secondary amino group of polyamines, such as spermine, spermidine and their acetyl derivatives. Substrate preference is spermidine &gt; norspermine &gt; thermospermine &gt; N(1)-acetylspermine &gt; spermine. No activity detected when putrescine is used as substrate. Plays an important role in the regulation of polyamine intracellular concentration. This is Polyamine oxidase 3 from Oryza sativa subsp. japonica (Rice).